A 330-amino-acid chain; its full sequence is tRNA (guanine(37)-N(1))-methyltransferase Trm5b (330 aa).

Residues Arg173, 211-212, 238-239, and Asn252 each bind S-adenosyl-L-methionine; these read DI and DS.

This sequence belongs to the class I-like SAM-binding methyltransferase superfamily. TRM5/TYW2 family.

It is found in the cytoplasm. The enzyme catalyses guanosine(37) in tRNA + S-adenosyl-L-methionine = N(1)-methylguanosine(37) in tRNA + S-adenosyl-L-homocysteine + H(+). Functionally, specifically methylates the N1 position of guanosine-37 in various tRNAs. The sequence is that of tRNA (guanine(37)-N(1))-methyltransferase Trm5b from Pyrococcus abyssi (strain GE5 / Orsay).